We begin with the raw amino-acid sequence, 209 residues long: MSGSSERELASIVRDLGCGPTFWAPTTQRFPGFLAGDKLACAIVNTAGRETGGVHWLAFGWNPRSRTCYMFDPFGFSDRRLKQIYSFEYEAMLRRSAVASSPDRCLSLEQSTQTVQGPDSAACGLFCCMFLHAFVHWPDRPMDGNPTMNLLTGVPNGMLQSPQVLPTLRRNQEELYRFLARHSPYFRSHRAAIEHATAFDKMKQLRVSQ.

Active-site residues include H55, D72, and C123.

It belongs to the peptidase C5 family. Interacts with protease cofactor pVI-C; this interaction is necessary for protease activation.

The protein localises to the virion. It localises to the host nucleus. The catalysed reaction is Cleaves proteins of the adenovirus and its host cell at two consensus sites: -Yaa-Xaa-Gly-Gly-|-Xaa- and -Yaa-Xaa-Gly-Xaa-|-Gly- (in which Yaa is Met, Ile or Leu, and Xaa is any amino acid).. Its activity is regulated as follows. Requires DNA and protease cofactor for maximal activation. Inside nascent virions, becomes partially activated by binding to the viral DNA, allowing it to cleave the cofactor that binds to the protease and fully activates it. Actin, like the viral protease cofactor, seems to act as a cofactor in the cleavage of cytokeratin 18 and of actin itself. Cleaves viral precursor proteins (pTP, pIIIa, pVI, pVII, pVIII, and pX) inside newly assembled particles giving rise to mature virions. Protease complexed to its cofactor slides along the viral DNA to specifically locate and cleave the viral precursors. Mature virions have a weakened organization compared to the unmature virions, thereby facilitating subsequent uncoating. Without maturation, the particle lacks infectivity and is unable to uncoat. Late in adenovirus infection, in the cytoplasm, may participate in the cytoskeleton destruction. Cleaves host cell cytoskeletal keratins K7 and K18. The protein is Protease of Human adenovirus D serotype 17 (HAdV-17).